A 188-amino-acid polypeptide reads, in one-letter code: Elongation factor P-like protein (188 aa).

The protein belongs to the elongation factor P family.

The protein is Elongation factor P-like protein of Vibrio cholerae serotype O1 (strain ATCC 39541 / Classical Ogawa 395 / O395).